The primary structure comprises 156 residues: Small ribosomal subunit protein uS7 (156 aa).

It belongs to the universal ribosomal protein uS7 family. Part of the 30S ribosomal subunit. Contacts proteins S9 and S11.

Functionally, one of the primary rRNA binding proteins, it binds directly to 16S rRNA where it nucleates assembly of the head domain of the 30S subunit. Is located at the subunit interface close to the decoding center, probably blocks exit of the E-site tRNA. The sequence is that of Small ribosomal subunit protein uS7 from Oleidesulfovibrio alaskensis (strain ATCC BAA-1058 / DSM 17464 / G20) (Desulfovibrio alaskensis).